The chain runs to 143 residues: MSRPTKFRKVDFFPKSTCFIPLGKPKCEVEEIALKIEELEAIRLKDIKELNQEECAAKMEVSRQTFQNIIDSARKKIAIALTEGNAIAIGGGNFKSKFCKFKCLDCRNTYEINCENDKHMCPSCGSNNIVCNKKTGSCENLCK.

Belongs to the UPF0251 family.

This chain is UPF0251 protein CA_C3166, found in Clostridium acetobutylicum (strain ATCC 824 / DSM 792 / JCM 1419 / IAM 19013 / LMG 5710 / NBRC 13948 / NRRL B-527 / VKM B-1787 / 2291 / W).